A 333-amino-acid chain; its full sequence is Phenylalanine--tRNA ligase alpha subunit (333 aa).

E254 lines the Mg(2+) pocket.

The protein belongs to the class-II aminoacyl-tRNA synthetase family. Phe-tRNA synthetase alpha subunit type 1 subfamily. In terms of assembly, tetramer of two alpha and two beta subunits. The cofactor is Mg(2+).

It localises to the cytoplasm. It carries out the reaction tRNA(Phe) + L-phenylalanine + ATP = L-phenylalanyl-tRNA(Phe) + AMP + diphosphate + H(+). The chain is Phenylalanine--tRNA ligase alpha subunit from Xylella fastidiosa (strain M12).